The sequence spans 207 residues: Cytidylyl-2-hydroxypropylphosphonate hydrolase (207 aa).

Residues tryptophan 68, arginine 74, glutamine 76, and serine 77 each coordinate CDP. Residues asparagine 109, aspartate 125, glutamate 127, and aspartate 129 each coordinate a divalent metal cation. Residue lysine 142 participates in CDP binding. Lysine 142 serves as the catalytic Proton donor. Aspartate 143 contacts a divalent metal cation.

The protein belongs to the FomD family. Requires Mn(2+) as cofactor. It depends on Co(2+) as a cofactor.

The enzyme catalyses cytidine 5'-({hydroxy[(S)-2-hydroxypropyl]phosphonoyl}phosphate) + H2O = (S)-2-hydroxypropylphosphonate + CMP + H(+). It functions in the pathway antibiotic biosynthesis; fosfomycin biosynthesis. Hydrolysis of (S)-HPP-CMP is inhibited by CDP. Its function is as follows. Involved in fosfomycin biosynthesis. Catalyzes the hydrolysis of cytidylyl (S)-2-hydroxypropylphosphonate ((S)-HPP-CMP) to give (S)-2-hydroxypropylphosphonate ((S)-HPP) and CMP. Can also hydrolyze (R)-HPP-CMP and cytidylyl 2-hydroxyethylphosphonate (HEP-CMP), which is a biosynthetic intermediate before C-methylation, but the catalytic efficiency is much higher with (S)-HPP-CMP. The chain is Cytidylyl-2-hydroxypropylphosphonate hydrolase from Streptomyces fradiae (Streptomyces roseoflavus).